The chain runs to 199 residues: Holliday junction branch migration complex subunit RuvA (199 aa).

Positions 1–64 (MIALLTGKLA…EDAINLYGFR (64 aa)) are domain I. Residues 65 to 143 (TMEEKEMFQL…KLGHGPLQQD (79 aa)) are domain II. The interval 144-148 (VAPAD) is flexible linker. Residues 149–199 (AHNDMRDDVVSALVNLGYKEAVVQKTVDEIGVAADATVESLLKQALKKLMK) form a domain III region.

This sequence belongs to the RuvA family. Homotetramer. Forms an RuvA(8)-RuvB(12)-Holliday junction (HJ) complex. HJ DNA is sandwiched between 2 RuvA tetramers; dsDNA enters through RuvA and exits via RuvB. An RuvB hexamer assembles on each DNA strand where it exits the tetramer. Each RuvB hexamer is contacted by two RuvA subunits (via domain III) on 2 adjacent RuvB subunits; this complex drives branch migration. In the full resolvosome a probable DNA-RuvA(4)-RuvB(12)-RuvC(2) complex forms which resolves the HJ.

It is found in the cytoplasm. In terms of biological role, the RuvA-RuvB-RuvC complex processes Holliday junction (HJ) DNA during genetic recombination and DNA repair, while the RuvA-RuvB complex plays an important role in the rescue of blocked DNA replication forks via replication fork reversal (RFR). RuvA specifically binds to HJ cruciform DNA, conferring on it an open structure. The RuvB hexamer acts as an ATP-dependent pump, pulling dsDNA into and through the RuvAB complex. HJ branch migration allows RuvC to scan DNA until it finds its consensus sequence, where it cleaves and resolves the cruciform DNA. This chain is Holliday junction branch migration complex subunit RuvA, found in Geotalea daltonii (strain DSM 22248 / JCM 15807 / FRC-32) (Geobacter daltonii).